The chain runs to 319 residues: Taste receptor type 2 member 39 (319 aa).

At 1–16 (MAQPSNYWKQDLLPLS) the chain is on the extracellular side. Residues 17–37 (ILILTLVATECTIGIIASGII) traverse the membrane as a helical segment. The Cytoplasmic segment spans residues 38–56 (TVVNAVSWVQKRAVSITTR). The helical transmembrane segment at 57 to 77 (ILLLLSVSRIGLQSIILIEMT) threads the bilayer. Topologically, residues 78–97 (SSIFNFSSYNSVLYRVSRVS) are extracellular. An N-linked (GlcNAc...) asparagine glycan is attached at Asn82. The helical transmembrane segment at 98-118 (FVFLNYCSLWFAALLSFFHFV) threads the bilayer. The Cytoplasmic portion of the chain corresponds to 119–137 (KIANFSYPLFFKLKWRISE). Residues 138–158 (LMPWLLWLSVFISFSSSMFFC) form a helical membrane-spanning segment. The Extracellular segment spans residues 159-187 (NHKYTVYNNISLSSNICNFTMELYVAEAN). N-linked (GlcNAc...) asparagine glycans are attached at residues Asn167 and Asn176. A helical membrane pass occupies residues 188–208 (VVNVAFLFSFGILPPLTMFIA). Topologically, residues 209 to 247 (TATLLIFSLRRHTLHMRNGDADSRNPRVEAHKQAIKETS) are cytoplasmic. A helical transmembrane segment spans residues 248 to 268 (CFLFLYILYAAVLFLSTSNIA). Topologically, residues 269–273 (DASLF) are extracellular. A helical transmembrane segment spans residues 274–294 (WSSVLRISLPVYPAGHSVLLI). Residues 295 to 319 (QSNPGLKRTWKQLLSQIHLHLQSRY) lie on the Cytoplasmic side of the membrane.

It belongs to the G-protein coupled receptor T2R family.

The protein resides in the membrane. Putative taste receptor which may play a role in the perception of bitterness. The polypeptide is Taste receptor type 2 member 39 (Rattus norvegicus (Rat)).